The primary structure comprises 367 residues: Glutamate 5-kinase (367 aa).

Residue Lys-10 participates in ATP binding. Residues Ser-50, Asp-137, and Asn-149 each contribute to the substrate site. Residues 169 to 170 (TD) and 211 to 217 (TGGMGTK) contribute to the ATP site. Residues 275–353 (AGELTVDAGA…QQIDAILGYE (79 aa)) enclose the PUA domain.

It belongs to the glutamate 5-kinase family.

It is found in the cytoplasm. The catalysed reaction is L-glutamate + ATP = L-glutamyl 5-phosphate + ADP. Its pathway is amino-acid biosynthesis; L-proline biosynthesis; L-glutamate 5-semialdehyde from L-glutamate: step 1/2. Catalyzes the transfer of a phosphate group to glutamate to form L-glutamate 5-phosphate. The sequence is that of Glutamate 5-kinase from Klebsiella pneumoniae (strain 342).